The chain runs to 121 residues: Large ribosomal subunit protein uL14 (121 aa).

The protein belongs to the universal ribosomal protein uL14 family. Part of the 50S ribosomal subunit. Forms a cluster with proteins L3 and L19. In the 70S ribosome, L14 and L19 interact and together make contacts with the 16S rRNA in bridges B5 and B8.

Its function is as follows. Binds to 23S rRNA. Forms part of two intersubunit bridges in the 70S ribosome. The sequence is that of Large ribosomal subunit protein uL14 from Prochlorococcus marinus (strain MIT 9515).